A 476-amino-acid polypeptide reads, in one-letter code: NADP-dependent glyceraldehyde-3-phosphate dehydrogenase (476 aa).

Arg-103 is a binding site for substrate. Ser-151 is an NADP(+) binding site. 154–155 contributes to the substrate binding site; it reads NY. Residues Lys-177, Thr-180, Asp-215, and 230–251 each bind NADP(+); that span reads GSTP…MLEL. Active-site residues include Glu-250 and Cys-284. 283 to 285 provides a ligand contact to substrate; sequence RCT. Residue Glu-377 participates in NADP(+) binding. Residue Arg-437 participates in substrate binding.

It belongs to the aldehyde dehydrogenase family. As to quaternary structure, homotetramer.

It carries out the reaction D-glyceraldehyde 3-phosphate + NADP(+) + H2O = (2R)-3-phosphoglycerate + NADPH + 2 H(+). Its function is as follows. Catalyzes the irreversible NADP-dependent oxidation of glyceraldehyde-3-phosphate to 3-phosphoglycerate. Is not able to use NAD instead of NADP. May play an important role in NADPH production in S.equinus. This Streptococcus equinus (Streptococcus bovis) protein is NADP-dependent glyceraldehyde-3-phosphate dehydrogenase (gapN).